A 144-amino-acid polypeptide reads, in one-letter code: Large ribosomal subunit protein uL15 (144 aa).

Residues 1-53 (MRLNTLSPAEGAKHAPKRVGRGIGSGLGKTGGRGHKGQKSRSGGGVRRGFEGG) form a disordered region. The span at 21 to 31 (RGIGSGLGKTG) shows a compositional bias: gly residues.

It belongs to the universal ribosomal protein uL15 family. Part of the 50S ribosomal subunit.

Its function is as follows. Binds to the 23S rRNA. The sequence is that of Large ribosomal subunit protein uL15 from Proteus mirabilis (strain HI4320).